Consider the following 141-residue polypeptide: Nucleoside diphosphate kinase (141 aa).

Residues lysine 11, phenylalanine 59, arginine 87, threonine 93, arginine 104, and asparagine 114 each coordinate ATP. The Pros-phosphohistidine intermediate role is filled by histidine 117.

This sequence belongs to the NDK family. Homotetramer. It depends on Mg(2+) as a cofactor.

The protein localises to the cytoplasm. The enzyme catalyses a 2'-deoxyribonucleoside 5'-diphosphate + ATP = a 2'-deoxyribonucleoside 5'-triphosphate + ADP. The catalysed reaction is a ribonucleoside 5'-diphosphate + ATP = a ribonucleoside 5'-triphosphate + ADP. Functionally, major role in the synthesis of nucleoside triphosphates other than ATP. The ATP gamma phosphate is transferred to the NDP beta phosphate via a ping-pong mechanism, using a phosphorylated active-site intermediate. The protein is Nucleoside diphosphate kinase of Bordetella petrii (strain ATCC BAA-461 / DSM 12804 / CCUG 43448).